Reading from the N-terminus, the 185-residue chain is Elongation factor P (185 aa).

This sequence belongs to the elongation factor P family.

The protein localises to the cytoplasm. Its pathway is protein biosynthesis; polypeptide chain elongation. Functionally, involved in peptide bond synthesis. Stimulates efficient translation and peptide-bond synthesis on native or reconstituted 70S ribosomes in vitro. Probably functions indirectly by altering the affinity of the ribosome for aminoacyl-tRNA, thus increasing their reactivity as acceptors for peptidyl transferase. In Syntrophomonas wolfei subsp. wolfei (strain DSM 2245B / Goettingen), this protein is Elongation factor P.